The following is a 336-amino-acid chain: Glycerol-3-phosphate dehydrogenase [NAD(P)+] (336 aa).

Residues S13, W14, R34, and K108 each coordinate NADPH. Residues K108, G138, and S140 each contribute to the sn-glycerol 3-phosphate site. A142 provides a ligand contact to NADPH. Residues K193, D246, S256, R257, and N258 each contribute to the sn-glycerol 3-phosphate site. The active-site Proton acceptor is K193. Position 257 (R257) interacts with NADPH. The NADPH site is built by V281 and E283.

It belongs to the NAD-dependent glycerol-3-phosphate dehydrogenase family.

It is found in the cytoplasm. The catalysed reaction is sn-glycerol 3-phosphate + NAD(+) = dihydroxyacetone phosphate + NADH + H(+). It carries out the reaction sn-glycerol 3-phosphate + NADP(+) = dihydroxyacetone phosphate + NADPH + H(+). It participates in membrane lipid metabolism; glycerophospholipid metabolism. Catalyzes the reduction of the glycolytic intermediate dihydroxyacetone phosphate (DHAP) to sn-glycerol 3-phosphate (G3P), the key precursor for phospholipid synthesis. The polypeptide is Glycerol-3-phosphate dehydrogenase [NAD(P)+] (Carboxydothermus hydrogenoformans (strain ATCC BAA-161 / DSM 6008 / Z-2901)).